The following is a 383-amino-acid chain: Acetylornithine deacetylase (383 aa).

His80 contacts Zn(2+). Asp82 is a catalytic residue. Asp112 is a binding site for Zn(2+). Glu144 is a catalytic residue. Glu145, Glu169, and His355 together coordinate Zn(2+).

This sequence belongs to the peptidase M20A family. ArgE subfamily. Homodimer. Zn(2+) is required as a cofactor. Requires Co(2+) as cofactor. The cofactor is glutathione.

It is found in the cytoplasm. It catalyses the reaction N(2)-acetyl-L-ornithine + H2O = L-ornithine + acetate. Its pathway is amino-acid biosynthesis; L-arginine biosynthesis; L-ornithine from N(2)-acetyl-L-ornithine (linear): step 1/1. Its function is as follows. Catalyzes the hydrolysis of the amide bond of N(2)-acetylated L-amino acids. Cleaves the acetyl group from N-acetyl-L-ornithine to form L-ornithine, an intermediate in L-arginine biosynthesis pathway, and a branchpoint in the synthesis of polyamines. The sequence is that of Acetylornithine deacetylase from Escherichia coli O7:K1 (strain IAI39 / ExPEC).